We begin with the raw amino-acid sequence, 274 residues long: MAIHLYKTSTPSTRNGAVDSQVKSNPRNNLICGQHHCGKGRNARGIITARHRGGGHKRLYRKIDFRRNAKDIYGRIVTIEYDPNRNAYICLIHYGDGEKRYILHPRGAIIGDTIVSGTEVPIKMGNALPLTDMPLGTAIHNIEITLGRGGQLARAAGAVAKLIAKEGKSATLKLPSGEVRLISKNCSATVGQVGNVGVNQKSLGRAGSKCWLGKRPVVRGVVMNPVDHPHGGGEGRAPIGRKKPVTPWGYPALGRRTRKRKKYSETLILRRRSK.

Disordered stretches follow at residues 1–21 (MAIHLYKTSTPSTRNGAVDSQ) and 225–274 (PVDH…RRSK).

Belongs to the universal ribosomal protein uL2 family. In terms of assembly, part of the 50S ribosomal subunit.

The protein resides in the plastid. Its subcellular location is the chloroplast. In Arabidopsis thaliana (Mouse-ear cress), this protein is Large ribosomal subunit protein uL2cz/uL2cy (rpl2-A).